We begin with the raw amino-acid sequence, 142 residues long: Transcriptional regulator MraZ (142 aa).

SpoVT-AbrB domains lie at 5–51 (ASSL…PRPV) and 77–120 (ASDV…DATK).

The protein belongs to the MraZ family. In terms of assembly, forms oligomers.

The protein resides in the cytoplasm. It is found in the nucleoid. The sequence is that of Transcriptional regulator MraZ from Janthinobacterium sp. (strain Marseille) (Minibacterium massiliensis).